Here is a 212-residue protein sequence, read N- to C-terminus: Chloramphenicol acetyltransferase (212 aa).

The active-site Proton acceptor is the H186.

It belongs to the chloramphenicol acetyltransferase family. Homotrimer.

The catalysed reaction is chloramphenicol + acetyl-CoA = chloramphenicol 3-acetate + CoA. Functionally, this enzyme is an effector of chloramphenicol resistance in bacteria. This chain is Chloramphenicol acetyltransferase (catD), found in Clostridioides difficile (Peptoclostridium difficile).